Here is a 520-residue protein sequence, read N- to C-terminus: Cryptochrome DASH (520 aa).

Positions 5–141 (RTVICLLRND…RVQTFWGSTL (137 aa)) constitute a Photolyase/cryptochrome alpha/beta domain. Positions 479–504 (SRHVNNKSSGPSSSKGRKGSSYTARQ) are disordered.

This sequence belongs to the DNA photolyase class-1 family. It depends on FAD as a cofactor. (6R)-5,10-methylene-5,6,7,8-tetrahydrofolate is required as a cofactor.

In terms of biological role, may have a photoreceptor function. Has weak cyclobutyl pyrimidine photolyase activity when expressed in E.coli and when tested in vitro. This is Cryptochrome DASH (cry-dash) from Danio rerio (Zebrafish).